The sequence spans 377 residues: Bradyzoite pseudokinase 1 (377 aa).

A signal peptide spans 1-26 (MANTSVRRRQLLSSVLLLQWLTTVLG). Positions 39 to 58 (HGQFPSLRRTEGVSQSGSGH) are disordered. One can recognise a Protein kinase domain in the interval 48-354 (TEGVSQSGSG…IEEIMKDPLF (307 aa)).

It belongs to the protein kinase superfamily. STE Ser/Thr protein kinase family. WNG subfamily. As to quaternary structure, forms a complex composed of BPK1, MCP4, MAG1, GRA8 and GRA9. Interacts with MCP4. Interacts with MAG1. Interacts with GRA8. Interacts with GRA9.

The protein localises to the secreted. In terms of biological role, required for the growth, maintenance, and/or stability, and thus infectivity, of bradyzoite cysts. The sequence is that of Bradyzoite pseudokinase 1 from Toxoplasma gondii.